The sequence spans 486 residues: UDP-N-acetylmuramate--L-alanine ligase (486 aa).

129 to 135 (GTHGKTT) contacts ATP.

It belongs to the MurCDEF family.

It is found in the cytoplasm. It catalyses the reaction UDP-N-acetyl-alpha-D-muramate + L-alanine + ATP = UDP-N-acetyl-alpha-D-muramoyl-L-alanine + ADP + phosphate + H(+). Its pathway is cell wall biogenesis; peptidoglycan biosynthesis. Functionally, cell wall formation. The protein is UDP-N-acetylmuramate--L-alanine ligase of Vibrio atlanticus (strain LGP32) (Vibrio splendidus (strain Mel32)).